The following is a 717-amino-acid chain: ATP-dependent zinc metalloprotease FtsH (717 aa).

Topologically, residues 1-7 (MFKDKKM) are cytoplasmic. A helical membrane pass occupies residues 8 to 28 (LKYIVIYSIIAFGILLTFNMV). The Extracellular portion of the chain corresponds to 29-109 (KDEMLYEKVD…VEFNVTKPEN (81 aa)). Residues 110 to 130 (YQLLGLLMSWVFPLILIFFVG) traverse the membrane as a helical segment. At 131 to 717 (RMMFSKMNNK…SSTNNKVDGE (587 aa)) the chain is on the cytoplasmic side. An ATP-binding site is contributed by 206-213 (GPPGTGKT). Residue histidine 427 coordinates Zn(2+). Glutamate 428 is an active-site residue. Histidine 431 and aspartate 504 together coordinate Zn(2+). Positions 670-717 (KLARANNEANNDALDSSKENEEVKSNVNDGATEEKKDDSSTNNKVDGE) are disordered. 2 stretches are compositionally biased toward basic and acidic residues: residues 684–693 (DSSKENEEVK) and 701–717 (TEEK…VDGE).

This sequence in the central section; belongs to the AAA ATPase family. In the C-terminal section; belongs to the peptidase M41 family. As to quaternary structure, homohexamer. Zn(2+) is required as a cofactor.

It localises to the cell membrane. In terms of biological role, acts as a processive, ATP-dependent zinc metallopeptidase for both cytoplasmic and membrane proteins. Plays a role in the quality control of integral membrane proteins. This is ATP-dependent zinc metalloprotease FtsH from Clostridium perfringens (strain ATCC 13124 / DSM 756 / JCM 1290 / NCIMB 6125 / NCTC 8237 / Type A).